The sequence spans 276 residues: Large ribosomal subunit protein uL2 (276 aa).

A disordered region spans residues 219–276; the sequence is TVRGSVMNPNDHPHGGGEGKQPIGRKQQMTPWGKKARGIKTRDKKKASTSMIVRRRNG. A compositionally biased stretch (basic residues) spans 252 to 276; that stretch reads KKARGIKTRDKKKASTSMIVRRRNG.

It belongs to the universal ribosomal protein uL2 family. Part of the 50S ribosomal subunit. Forms a bridge to the 30S subunit in the 70S ribosome.

In terms of biological role, one of the primary rRNA binding proteins. Required for association of the 30S and 50S subunits to form the 70S ribosome, for tRNA binding and peptide bond formation. It has been suggested to have peptidyltransferase activity; this is somewhat controversial. Makes several contacts with the 16S rRNA in the 70S ribosome. This chain is Large ribosomal subunit protein uL2, found in Acholeplasma laidlawii (strain PG-8A).